The primary structure comprises 80 residues: D-alanyl carrier protein 2 (80 aa).

A Carrier domain is found at Met1–Gln80. Position 38 is an O-(pantetheine 4'-phosphoryl)serine (Ser38).

This sequence belongs to the DltC family. Post-translationally, 4'-phosphopantetheine is transferred from CoA to a specific serine of apo-DCP.

The protein localises to the cytoplasm. The protein operates within cell wall biogenesis; lipoteichoic acid biosynthesis. Its function is as follows. Carrier protein involved in the D-alanylation of lipoteichoic acid (LTA). The loading of thioester-linked D-alanine onto DltC is catalyzed by D-alanine--D-alanyl carrier protein ligase DltA. The DltC-carried D-alanyl group is further transferred to cell membrane phosphatidylglycerol (PG) by forming an ester bond, probably catalyzed by DltD. D-alanylation of LTA plays an important role in modulating the properties of the cell wall in Gram-positive bacteria, influencing the net charge of the cell wall. The sequence is that of D-alanyl carrier protein 2 from Lactiplantibacillus plantarum (strain ATCC BAA-793 / NCIMB 8826 / WCFS1) (Lactobacillus plantarum).